Here is a 148-residue protein sequence, read N- to C-terminus: Large ribosomal subunit protein uL15 (148 aa).

Over residues 1–12 (MSEPIKLHDLRP) the composition is skewed to basic and acidic residues. The segment at 1–52 (MSEPIKLHDLRPAKGANKPKTRVGRGEASKGKTAGRGTKGTKARKQVSAAFE) is disordered.

It belongs to the universal ribosomal protein uL15 family. Part of the 50S ribosomal subunit.

Functionally, binds to the 23S rRNA. The chain is Large ribosomal subunit protein uL15 from Corynebacterium diphtheriae (strain ATCC 700971 / NCTC 13129 / Biotype gravis).